The following is a 125-amino-acid chain: Holo-[acyl-carrier-protein] synthase (125 aa).

Aspartate 8 and glutamate 57 together coordinate Mg(2+).

It belongs to the P-Pant transferase superfamily. AcpS family. Requires Mg(2+) as cofactor.

The protein localises to the cytoplasm. It catalyses the reaction apo-[ACP] + CoA = holo-[ACP] + adenosine 3',5'-bisphosphate + H(+). Transfers the 4'-phosphopantetheine moiety from coenzyme A to a Ser of acyl-carrier-protein. This chain is Holo-[acyl-carrier-protein] synthase, found in Koribacter versatilis (strain Ellin345).